The sequence spans 105 residues: MADWDGKYISPYAEHGKKSEQVKKITVSIPIKVLEILTNERTRRQLRNLRHATNSELLCEAFLHAFTGQPLPTDEDLLKERHDEIPESAKQIMRELGINPDDWEY.

Belongs to the MetJ family. As to quaternary structure, homodimer.

The protein localises to the cytoplasm. Functionally, this regulatory protein, when combined with SAM (S-adenosylmethionine) represses the expression of the methionine regulon and of enzymes involved in SAM synthesis. In Histophilus somni (strain 129Pt) (Haemophilus somnus), this protein is Met repressor.